Consider the following 262-residue polypeptide: Ribosomal RNA small subunit methyltransferase A (262 aa).

6 residues coordinate S-adenosyl-L-methionine: His-11, Ile-13, Gly-38, Glu-60, Asp-85, and Asn-105.

The protein belongs to the class I-like SAM-binding methyltransferase superfamily. rRNA adenine N(6)-methyltransferase family. RsmA subfamily.

The protein resides in the cytoplasm. It carries out the reaction adenosine(1518)/adenosine(1519) in 16S rRNA + 4 S-adenosyl-L-methionine = N(6)-dimethyladenosine(1518)/N(6)-dimethyladenosine(1519) in 16S rRNA + 4 S-adenosyl-L-homocysteine + 4 H(+). Specifically dimethylates two adjacent adenosines (A1518 and A1519) in the loop of a conserved hairpin near the 3'-end of 16S rRNA in the 30S particle. May play a critical role in biogenesis of 30S subunits. In Neorickettsia sennetsu (strain ATCC VR-367 / Miyayama) (Ehrlichia sennetsu), this protein is Ribosomal RNA small subunit methyltransferase A.